We begin with the raw amino-acid sequence, 435 residues long: Putative F-box/FBD/LRR-repeat protein At5g56810 (435 aa).

An F-box domain is found at 14–62 (PDRISQLPNDLLFRILSLIPVSDAMSTSLLSKRWKSVWKMLPTLVYNEN). LRR repeat units follow at residues 64 to 95 (CSNI…TLEL), 146 to 173 (LKLQ…YLTC), 174 to 199 (VNFE…FLQR), 222 to 248 (KEQA…NIFD), 266 to 291 (SVRV…SLDL), and 316 to 341 (YDNF…KLNH). An FBD domain is found at 353-404 (CSVSEPSSVPECLSFHLETFQWIGYAGTFEEIAAAVYVLKNARCLKNATISL).

The protein is Putative F-box/FBD/LRR-repeat protein At5g56810 of Arabidopsis thaliana (Mouse-ear cress).